The following is a 617-amino-acid chain: BTB/POZ domain-containing protein At3g08570 (617 aa).

The 71-residue stretch at 36–106 (GDITIVVDGE…CYGINFEITI (71 aa)) folds into the BTB domain. In terms of domain architecture, NPH3 spans 210-490 (EWWIEDLSAL…VRVLYSEQLR (281 aa)). Y431 carries the phosphotyrosine modification. Disordered regions lie at residues 505 to 525 (LSSQ…RDTY) and 585 to 617 (GGGP…ESMF). The segment covering 602-617 (SRLERKTVRSRPESMF) has biased composition (basic and acidic residues).

Belongs to the NPH3 family.

The protein operates within protein modification; protein ubiquitination. May act as a substrate-specific adapter of an E3 ubiquitin-protein ligase complex (CUL3-RBX1-BTB) which mediates the ubiquitination and subsequent proteasomal degradation of target proteins. The chain is BTB/POZ domain-containing protein At3g08570 from Arabidopsis thaliana (Mouse-ear cress).